Consider the following 277-residue polypeptide: S-formylglutathione hydrolase FrmB (277 aa).

Active-site charge relay system residues include Ser145, Asp221, and His254.

The protein belongs to the esterase D family.

It carries out the reaction S-formylglutathione + H2O = formate + glutathione + H(+). Its function is as follows. Serine hydrolase involved in the detoxification of formaldehyde. Hydrolyzes S-formylglutathione to glutathione and formate. This chain is S-formylglutathione hydrolase FrmB (frmB), found in Escherichia coli O139:H28 (strain E24377A / ETEC).